The chain runs to 176 residues: Nuclear transcription factor Y subunit B-10 (176 aa).

A compositionally biased stretch (gly residues) spans Met-1–Glu-15. The tract at residues Met-1–Glu-29 is disordered. Ala-2 carries the N-acetylalanine modification. The DNA-binding element occupies Leu-34–Ser-40. The interval Met-61–Val-72 is subunit association domain (SAD). Positions Gly-121–Glu-176 are disordered. Positions Gln-139–Pro-159 are enriched in low complexity. The span at Tyr-160–Met-169 shows a compositional bias: polar residues.

This sequence belongs to the NFYB/HAP3 subunit family. In terms of assembly, heterotrimeric transcription factor composed of three components, NF-YA, NF-YB and NF-YC. NF-YB and NF-YC must interact and dimerize for NF-YA association and DNA binding. In terms of tissue distribution, expressed in the whole plant, except roots.

Its subcellular location is the nucleus. In terms of biological role, component of the NF-Y/HAP transcription factor complex. The NF-Y complex stimulates the transcription of various genes by recognizing and binding to a CCAAT motif in promoters. This chain is Nuclear transcription factor Y subunit B-10 (NFYB10), found in Arabidopsis thaliana (Mouse-ear cress).